The chain runs to 357 residues: Elongation factor Ts (357 aa).

Residues 82–85 (TDFV) form an involved in Mg(2+) ion dislocation from EF-Tu region.

Belongs to the EF-Ts family.

The protein localises to the cytoplasm. In terms of biological role, associates with the EF-Tu.GDP complex and induces the exchange of GDP to GTP. It remains bound to the aminoacyl-tRNA.EF-Tu.GTP complex up to the GTP hydrolysis stage on the ribosome. In Campylobacter jejuni subsp. doylei (strain ATCC BAA-1458 / RM4099 / 269.97), this protein is Elongation factor Ts.